A 256-amino-acid chain; its full sequence is MATTSAAVLNGLSSSFLTGGNKSQALLAAPLAARVGGAATPKRFTVLAAAAKKSWIPAVRGGGNLVDPEWLDGSLPGDYGFDPLGLGKDPAFLKWYREAELIHGRWAMAAVLGIFVGQAWSGIPWFEAGADPGAIAPFSFGTLLGTQLILMGWVESKRWVDFFDPDSQSVEWATPWSKTAENFANFTGEQGYPGGKFFDPLALAGTLNNGVYVPDTEKLERLKVAEIKHARLAMLAMLIFYFEAGQGKTPLGALGL.

The next 2 membrane-spanning stretches (helical) occupy residues 106-126 and 134-154; these read WAMAAVLGIFVGQAWSGIPWF and AIAPFSFGTLLGTQLILMGWV.

Belongs to the ELIP/psbS family.

The protein resides in the plastid. It is found in the chloroplast thylakoid membrane. This chain is Chlorophyll a-b binding protein CP24 10A, chloroplastic (CAP10A), found in Solanum lycopersicum (Tomato).